The following is a 94-amino-acid chain: Large ribosomal subunit protein bL25 (94 aa).

The segment at 1–20 (MFKFNAEVRQSQGKGASRRL) is disordered.

It belongs to the bacterial ribosomal protein bL25 family. In terms of assembly, part of the 50S ribosomal subunit; part of the 5S rRNA/L5/L18/L25 subcomplex. Contacts the 5S rRNA. Binds to the 5S rRNA independently of L5 and L18.

Its function is as follows. This is one of the proteins that binds to the 5S RNA in the ribosome where it forms part of the central protuberance. This chain is Large ribosomal subunit protein bL25, found in Pasteurella multocida (strain Pm70).